The following is a 66-amino-acid chain: Large ribosomal subunit protein bL35 (66 aa).

Positions 1 to 16 (MPKQKTHRASAKRFKR) are enriched in basic residues. Residues 1–20 (MPKQKTHRASAKRFKRTGSG) are disordered.

This sequence belongs to the bacterial ribosomal protein bL35 family.

The protein is Large ribosomal subunit protein bL35 of Streptococcus uberis (strain ATCC BAA-854 / 0140J).